A 714-amino-acid chain; its full sequence is MEMASAFTLNVRLDNIAIITIDVPDEKMNTLKAEFASQVRAIIKQLRENKELRGVVFISAKPDNFIAGADINMIGNCKTVQEAEALARQGQQLMAEIHALPIPVIAAIHGACLGGGLELALACHGRVCTDDPKTVLGLPEVQLGLLPGSGGTQRLPRLIGVSTTLEMILTGKQLRAKQALKLGLVDDVVPHSILLEVAVELAKKDRPSSRPLPVRERILAGPLGRALLFKMVGKKTEHKTQGNYPATERILEVVETGLAQGTSSGYDAEARAFGELAMTPQSQALRSIFFASTDVKKDPGSDAPPAPLNSVGILGGGLMGGGIAYVTACKAGLPVRIKDINPQGINHALKYSWDQLEGKVRRRHLKASERDKQLALISGTTDYRGFAHRDLIIEAVFENLELKQQMVAEVEQNCAAHTIFASNTSSLPIGDIAAHATRPEQVIGLHFFSPVEKMPLVEIIPHAGTSAQTIATTVKLAKKQGKTPIVVRDKAGFYVNRILAPYINEAIRMLTKGERVEHIDAALVKFGFPVGPIQLLDEVGIDTGTKIIPVLEAAYGERFSAPANVVSSILNDDRKGRKNGRGFYLYGQKGRKSKKQVDPAIYPLIGAQGQGRLSAPQVSERCVMLMLNEAVRCVDEQVIRSVRDGDIGAVFGIGFPPFLGGPFRYIDSLGAGEVVAIMQRLATQYGSRFTPCERLVEMGARGESFWKTTATDLQ.

Residues methionine 1–proline 190 form an enoyl-CoA hydratase region. The interval alanine 306–glutamine 714 is 3-hydroxyacyl-CoA dehydrogenase.

It in the N-terminal section; belongs to the enoyl-CoA hydratase/isomerase family. The protein in the central section; belongs to the 3-hydroxyacyl-CoA dehydrogenase family. In terms of assembly, heterotetramer of two alpha chains (FadJ) and two beta chains (FadI).

The protein localises to the cytoplasm. The catalysed reaction is a (3S)-3-hydroxyacyl-CoA = a (2E)-enoyl-CoA + H2O. The enzyme catalyses a 4-saturated-(3S)-3-hydroxyacyl-CoA = a (3E)-enoyl-CoA + H2O. It carries out the reaction a (3S)-3-hydroxyacyl-CoA + NAD(+) = a 3-oxoacyl-CoA + NADH + H(+). It catalyses the reaction (3S)-3-hydroxybutanoyl-CoA = (3R)-3-hydroxybutanoyl-CoA. It participates in lipid metabolism; fatty acid beta-oxidation. Catalyzes the formation of a hydroxyacyl-CoA by addition of water on enoyl-CoA. Also exhibits 3-hydroxyacyl-CoA epimerase and 3-hydroxyacyl-CoA dehydrogenase activities. The chain is Fatty acid oxidation complex subunit alpha from Shigella boydii serotype 4 (strain Sb227).